A 457-amino-acid chain; its full sequence is MDHLPIFCQLRDRDCLLVGGGDVAERKARLLLEAGARLTVNALAFIPQFTVWANEGMLTLVEGAFEESLLDGCWLAIAATDDDAVNQQVSEAAESRRIFCNVVDAPKAASFIMPSIIDRSPLMVAVSSGGTSPVLARLLREKLESLLPQHLGQVAHYAGQLRARVKKQFATMGERRRFWEKLFINDRLAQSLANADAKAVSEITEQMLSEPLDHRGEVVLVGAGPGDAGLLTLKGLQQIQQADVVVYDRLVSDDIMNLVRRDADRVFVGKRAGYHCVPQEEINQILLREAQKGRRVVRLKGGDPFIFGRGGEELETLCHAGIPFSVVPGITAASGCSAYSGVPLTHRDYAQSVRLVTGHLKTGGELDWENLAAEKQTLVFYMGLNQAATIQEKLIAFGMQADMPVALVENGTAVKQRVVSGVLAQLGELAKQVESPALIIVGRVVALRDKLNWFSNH.

The segment at 1–204 (MDHLPIFCQL…ADAKAVSEIT (204 aa)) is precorrin-2 dehydrogenase /sirohydrochlorin ferrochelatase. Residues 22-23 (DV) and 43-44 (LA) each bind NAD(+). S128 bears the Phosphoserine mark. The segment at 216–457 (GEVVLVGAGP…RDKLNWFSNH (242 aa)) is uroporphyrinogen-III C-methyltransferase. S-adenosyl-L-methionine is bound at residue P225. D248 functions as the Proton acceptor in the catalytic mechanism. K270 functions as the Proton donor in the catalytic mechanism. S-adenosyl-L-methionine is bound by residues 301-303 (GGD), I306, 331-332 (TA), M382, and G411.

The protein in the N-terminal section; belongs to the precorrin-2 dehydrogenase / sirohydrochlorin ferrochelatase family. In the C-terminal section; belongs to the precorrin methyltransferase family.

It carries out the reaction uroporphyrinogen III + 2 S-adenosyl-L-methionine = precorrin-2 + 2 S-adenosyl-L-homocysteine + H(+). The enzyme catalyses precorrin-2 + NAD(+) = sirohydrochlorin + NADH + 2 H(+). It catalyses the reaction siroheme + 2 H(+) = sirohydrochlorin + Fe(2+). The protein operates within cofactor biosynthesis; adenosylcobalamin biosynthesis; precorrin-2 from uroporphyrinogen III: step 1/1. It functions in the pathway cofactor biosynthesis; adenosylcobalamin biosynthesis; sirohydrochlorin from precorrin-2: step 1/1. Its pathway is porphyrin-containing compound metabolism; siroheme biosynthesis; precorrin-2 from uroporphyrinogen III: step 1/1. It participates in porphyrin-containing compound metabolism; siroheme biosynthesis; siroheme from sirohydrochlorin: step 1/1. The protein operates within porphyrin-containing compound metabolism; siroheme biosynthesis; sirohydrochlorin from precorrin-2: step 1/1. In terms of biological role, multifunctional enzyme that catalyzes the SAM-dependent methylations of uroporphyrinogen III at position C-2 and C-7 to form precorrin-2 via precorrin-1. Then it catalyzes the NAD-dependent ring dehydrogenation of precorrin-2 to yield sirohydrochlorin. Finally, it catalyzes the ferrochelation of sirohydrochlorin to yield siroheme. This chain is Siroheme synthase, found in Citrobacter koseri (strain ATCC BAA-895 / CDC 4225-83 / SGSC4696).